Reading from the N-terminus, the 1004-residue chain is Liprin-beta homolog (1004 aa).

Low complexity-rich tracts occupy residues 50–63 and 149–161; these read NGNS…TIGS and SPPS…SSSL. 2 disordered regions span residues 50–122 and 135–161; these read NGNS…RSSR and HRTD…SSSL. Coiled coils occupy residues 280-328 and 364-396; these read CQEL…VNQS and DEMS…ALDE. Disordered regions lie at residues 341 to 366, 432 to 497, 528 to 550, and 648 to 686; these read HTNG…DDEM, PSDS…GGNQ, NGNE…GKAS, and FSKL…LGTV. The span at 434–453 shows a compositional bias: polar residues; the sequence is DSMSHSTSFPVSLSSTTSNG. The span at 458–474 shows a compositional bias: low complexity; sequence STVQSSSSYNSSLSAVS. Polar residues-rich tracts occupy residues 531 to 541 and 648 to 684; these read EGANHNYSSAS and FSKL…NHLG. 3 consecutive SAM domains span residues 698-762, 770-833, and 858-930; these read WRSE…IEED, WDVH…LKKA, and VVRW…LLGP.

It belongs to the liprin family. Liprin-beta subfamily. In terms of tissue distribution, expressed in pharyngeal muscle, particularly posterior bulb, adjacent to the dorsal and ventral cord (but not in ventral cord neurons), and in body wall muscles.

Involved in the regulation of synaptic function at neuromuscular junctions. Together with the liprin-alpha protein syd-2, may play a role in regulating the structure of the neuronal region, called the active zone, from which synaptic vesicles send neurotransmitter signals across the synapse. Does not seem to be required for neuronal development. May regulate the disassembly of focal adhesions. Does not bind receptor-like tyrosine phosphatases type 2A. The polypeptide is Liprin-beta homolog (Caenorhabditis elegans).